The chain runs to 188 residues: Adenine phosphoribosyltransferase (188 aa).

It belongs to the purine/pyrimidine phosphoribosyltransferase family. As to quaternary structure, homodimer.

Its subcellular location is the cytoplasm. It catalyses the reaction AMP + diphosphate = 5-phospho-alpha-D-ribose 1-diphosphate + adenine. Its pathway is purine metabolism; AMP biosynthesis via salvage pathway; AMP from adenine: step 1/1. Functionally, catalyzes a salvage reaction resulting in the formation of AMP, that is energically less costly than de novo synthesis. In Burkholderia lata (strain ATCC 17760 / DSM 23089 / LMG 22485 / NCIMB 9086 / R18194 / 383), this protein is Adenine phosphoribosyltransferase.